A 142-amino-acid chain; its full sequence is Hemoglobin subunit alpha-A (142 aa).

The 141-residue stretch at 2 to 142 (VLSAADKTNV…VGTVLTAKYR (141 aa)) folds into the Globin domain. His-59 is an O2 binding site. His-88 contributes to the heme b binding site.

This sequence belongs to the globin family. As to quaternary structure, heterotetramer of two alpha chains and two beta chains. Red blood cells.

In terms of biological role, involved in oxygen transport from the lung to the various peripheral tissues. The polypeptide is Hemoglobin subunit alpha-A (HBAA) (Anser indicus (Bar-headed goose)).